We begin with the raw amino-acid sequence, 293 residues long: 4-diphosphocytidyl-2-C-methyl-D-erythritol kinase (293 aa).

The active site involves Lys16. ATP is bound at residue 99–109; sequence PMGAGLGGGSS. Asp141 is a catalytic residue.

This sequence belongs to the GHMP kinase family. IspE subfamily.

It catalyses the reaction 4-CDP-2-C-methyl-D-erythritol + ATP = 4-CDP-2-C-methyl-D-erythritol 2-phosphate + ADP + H(+). Its pathway is isoprenoid biosynthesis; isopentenyl diphosphate biosynthesis via DXP pathway; isopentenyl diphosphate from 1-deoxy-D-xylulose 5-phosphate: step 3/6. Functionally, catalyzes the phosphorylation of the position 2 hydroxy group of 4-diphosphocytidyl-2C-methyl-D-erythritol. The sequence is that of 4-diphosphocytidyl-2-C-methyl-D-erythritol kinase from Burkholderia thailandensis (strain ATCC 700388 / DSM 13276 / CCUG 48851 / CIP 106301 / E264).